We begin with the raw amino-acid sequence, 123 residues long: MRQRLLPSVTSLLLVALLFPGSSQARHVNHSATEALGELRERAPGQGTNGFQLLRHAVKRDLLPPRTPPYQVHISHQEARGPSFKICVGFLGPRWARGCSTGNEKYHLPYAARDLQTFFLPFW.

The first 25 residues, 1-25 (MRQRLLPSVTSLLLVALLFPGSSQA), serve as a signal peptide directing secretion. Residue Asn29 is glycosylated (N-linked (GlcNAc...) asparagine).

This sequence belongs to the SPAG11 family.

The protein localises to the secreted. Has antimicrobial activity against E.coli. Plays a role in the defense response in the male reproductive tract, contributing to sperm maturation, storage and protection. The sequence is that of Sperm-associated antigen 11A from Homo sapiens (Human).